The following is a 37-amino-acid chain: Large ribosomal subunit protein bL36 (37 aa).

The protein belongs to the bacterial ribosomal protein bL36 family.

This chain is Large ribosomal subunit protein bL36, found in Persephonella marina (strain DSM 14350 / EX-H1).